The sequence spans 313 residues: Formimidoylglutamase (313 aa).

Positions 130, 155, 157, 159, 241, and 243 each coordinate Mn(2+).

Belongs to the arginase family. Mn(2+) is required as a cofactor.

It catalyses the reaction N-formimidoyl-L-glutamate + H2O = formamide + L-glutamate. It participates in amino-acid degradation; L-histidine degradation into L-glutamate; L-glutamate from N-formimidoyl-L-glutamate (hydrolase route): step 1/1. In terms of biological role, catalyzes the conversion of N-formimidoyl-L-glutamate to L-glutamate and formamide. The protein is Formimidoylglutamase of Salmonella paratyphi A (strain ATCC 9150 / SARB42).